A 76-amino-acid chain; its full sequence is Omega/kappa-hexatoxin-Ar1g (76 aa).

A signal peptide spans 1 to 22 (MNTATGFIVLLVLATVLGGIEA). A propeptide spanning residues 23–35 (GESHMRKDAMGRV) is cleaved from the precursor. 3 cysteine pairs are disulfide-bonded: cysteine 40/cysteine 55, cysteine 47/cysteine 60, and cysteine 54/cysteine 74.

This sequence belongs to the neurotoxin 08 (Shiva) family. 02 (omega/kappa toxin) subfamily. As to expression, expressed by the venom gland.

Its subcellular location is the secreted. Toxin that may inhibit ion channels. In Atrax robustus (Sydney funnel-web spider), this protein is Omega/kappa-hexatoxin-Ar1g.